The following is a 252-amino-acid chain: Probable oligoribonuclease (252 aa).

One can recognise an Exonuclease domain in the interval 81-241 (VWIDCEMTGL…ALSDILESIG (161 aa)). Residue tyrosine 202 is part of the active site.

It belongs to the oligoribonuclease family.

It is found in the cytoplasm. Its subcellular location is the nucleus. In terms of biological role, 3'-to-5' exoribonuclease specific for small oligoribonucleotides. The sequence is that of Probable oligoribonuclease (rex2) from Schizosaccharomyces pombe (strain 972 / ATCC 24843) (Fission yeast).